A 557-amino-acid polypeptide reads, in one-letter code: Thermosome subunit 2 (557 aa).

The tract at residues Asp527–Met557 is disordered. The segment covering Gly539–Met557 has biased composition (gly residues).

This sequence belongs to the TCP-1 chaperonin family. As to quaternary structure, the thermosome or CCT complex is a oligomeric complex of two octameric double-ring structures; the complex is probably a heterooligomer of CCT1, CCT2 and CCT3 with yet unknown stoichiometry.

Molecular chaperone that assists in the folding or refolding of nascent or denatured proteins along with ATP hydrolysis. ATPase activity is highest in thermosome assemblies containing CCT1:CCT2, followed by assemblies containing CCT1:CCT2:CCT3. Seems to contribute to thermosome ATPase activity. Not required for growth. The protein is Thermosome subunit 2 (cct2) of Haloferax volcanii (strain ATCC 29605 / DSM 3757 / JCM 8879 / NBRC 14742 / NCIMB 2012 / VKM B-1768 / DS2) (Halobacterium volcanii).